Here is a 451-residue protein sequence, read N- to C-terminus: Exodeoxyribonuclease 7 large subunit (451 aa).

Belongs to the XseA family. As to quaternary structure, heterooligomer composed of large and small subunits.

Its subcellular location is the cytoplasm. The enzyme catalyses Exonucleolytic cleavage in either 5'- to 3'- or 3'- to 5'-direction to yield nucleoside 5'-phosphates.. Its function is as follows. Bidirectionally degrades single-stranded DNA into large acid-insoluble oligonucleotides, which are then degraded further into small acid-soluble oligonucleotides. The sequence is that of Exodeoxyribonuclease 7 large subunit from Neisseria gonorrhoeae (strain ATCC 700825 / FA 1090).